The sequence spans 454 residues: CCA-adding enzyme (454 aa).

ATP is bound by residues Ser-53 and Lys-56. Residues Ser-53 and Lys-56 each contribute to the CTP site. Mg(2+) is bound by residues Asp-65, Asp-67, and Asp-119. Residues His-142, Lys-161, and Tyr-170 each coordinate ATP. CTP is bound by residues His-142, Lys-161, and Tyr-170.

This sequence belongs to the tRNA nucleotidyltransferase/poly(A) polymerase family. Archaeal CCA-adding enzyme subfamily. As to quaternary structure, homodimer. It depends on Mg(2+) as a cofactor.

It catalyses the reaction a tRNA precursor + 2 CTP + ATP = a tRNA with a 3' CCA end + 3 diphosphate. The catalysed reaction is a tRNA with a 3' CCA end + 2 CTP + ATP = a tRNA with a 3' CCACCA end + 3 diphosphate. Its function is as follows. Catalyzes the addition and repair of the essential 3'-terminal CCA sequence in tRNAs without using a nucleic acid template. Adds these three nucleotides in the order of C, C, and A to the tRNA nucleotide-73, using CTP and ATP as substrates and producing inorganic pyrophosphate. tRNA 3'-terminal CCA addition is required both for tRNA processing and repair. Also involved in tRNA surveillance by mediating tandem CCA addition to generate a CCACCA at the 3' terminus of unstable tRNAs. While stable tRNAs receive only 3'-terminal CCA, unstable tRNAs are marked with CCACCA and rapidly degraded. The chain is CCA-adding enzyme from Thermococcus gammatolerans (strain DSM 15229 / JCM 11827 / EJ3).